We begin with the raw amino-acid sequence, 446 residues long: RUN domain-containing protein 3A (446 aa).

The interaction with RAP2A stretch occupies residues M1 to A298. Residues D52–E189 form the RUN domain. The residue at position 215 (T215) is a Phosphothreonine. The tract at residues D216–P239 is disordered. Phosphoserine is present on S232. The stretch at Y267–I322 forms a coiled coil. Over residues P372–Q384 the composition is skewed to polar residues. A disordered region spans residues P372–P403. Residues R385–E394 show a composition bias toward basic and acidic residues. Residues S416 and S419 each carry the phosphoserine modification.

It belongs to the RUNDC3 family. In terms of assembly, interacts with the GTP-bound form of RAP2A. As to expression, brain.

May act as an effector of RAP2A in neuronal cells. In Mus musculus (Mouse), this protein is RUN domain-containing protein 3A (Rundc3a).